We begin with the raw amino-acid sequence, 153 residues long: MSGNAQKKAASRSMATKKLIIDEFKRRLRDNIKSLNDNFYHIIQAAKVNPDDNAFKNQTGKMTEFYTIKNEMAVRAQLMVRASDELLRLTTDLKEFLILHDFHFLTHNIKQAESQCEDTLRQQSHLHQALDTDVSNMLFALEEEIADNFFLGH.

Belongs to the Mediator complex subunit 22 family. In terms of assembly, component of the Mediator complex.

The protein localises to the nucleus. Functionally, component of the Mediator complex, a coactivator involved in the regulated transcription of nearly all RNA polymerase II-dependent genes. Mediator functions as a bridge to convey information from gene-specific regulatory proteins to the basal RNA polymerase II transcription machinery. Mediator is recruited to promoters by direct interactions with regulatory proteins and serves as a scaffold for the assembly of a functional preinitiation complex with RNA polymerase II and the general transcription factors. This chain is Mediator of RNA polymerase II transcription subunit 22 (mdt-22), found in Caenorhabditis briggsae.